The primary structure comprises 198 residues: HTH-type transcriptional regulator BetI (198 aa).

One can recognise an HTH tetR-type domain in the interval 8–68 (KIRRPQLVSA…ETMRDILRQL (61 aa)). A DNA-binding region (H-T-H motif) is located at residues 31 to 50 (SVSLISQEAGVSSGIINHYF).

It functions in the pathway amine and polyamine biosynthesis; betaine biosynthesis via choline pathway [regulation]. Its function is as follows. Repressor involved in the biosynthesis of the osmoprotectant glycine betaine. It represses transcription of the choline transporter BetT and the genes of BetAB involved in the synthesis of glycine betaine. The polypeptide is HTH-type transcriptional regulator BetI (Vibrio vulnificus (strain YJ016)).